The primary structure comprises 90 residues: Bombyxin G-1 (90 aa).

The first 19 residues, 1 to 19, serve as a signal peptide directing secretion; sequence MKLIIFVVFCITIYGSTSG. Intrachain disulfides connect Cys-28/Cys-77, Cys-40/Cys-90, and Cys-76/Cys-81. Residues 49-67 constitute a propeptide, c peptide like; the sequence is NTQYEGYHWPLLAYSEERI.

The protein belongs to the insulin family. In terms of assembly, heterodimer of a B chain and an A chain linked by two disulfide bonds.

The protein localises to the secreted. The chain is Bombyxin G-1 (BBXG1) from Bombyx mori (Silk moth).